The sequence spans 277 residues: Small ribosomal subunit protein uS2 (277 aa).

A disordered region spans residues 226 to 277 (GQQARADRGEDLGAAVEPVAEPALVEEAAAPVTEDEQVPAEAAAETERQSDA). Over residues 239–257 (AAVEPVAEPALVEEAAAPV) the composition is skewed to low complexity.

Belongs to the universal ribosomal protein uS2 family.

The sequence is that of Small ribosomal subunit protein uS2 from Sphingopyxis alaskensis (strain DSM 13593 / LMG 18877 / RB2256) (Sphingomonas alaskensis).